A 443-amino-acid polypeptide reads, in one-letter code: Aspartic protease PEP3 (443 aa).

Residues 1–36 (MQNRPRVFDSAMNLSPNMHFLSLMPGLLLLSLQVHT) form the signal peptide. A propeptide spans 37–107 (SPTPLKKTIR…NTVSKAMQAN (71 aa)) (activation peptide). Residues 123–440 (YLSPVTIGGQ…DLRGPSLHVA (318 aa)) enclose the Peptidase A1 domain. Residue D139 is part of the active site. Residues N180 and N293 are each glycosylated (N-linked (GlcNAc...) asparagine). D327 is an active-site residue. C363 and C403 are joined by a disulfide. N-linked (GlcNAc...) asparagine glycans are attached at residues N364 and N388.

The protein belongs to the peptidase A1 family. As to quaternary structure, monomer.

Its subcellular location is the secreted. Its function is as follows. Secreted aspartic endopeptidase that allows assimilation of proteinaceous substrates. The scissile peptide bond is attacked by a nucleophilic water molecule activated by two aspartic residues in the active site. Shows a broad primary substrate specificity. Favors hydrophobic residues at the P1 and P1' positions. The protein is Aspartic protease PEP3 of Coccidioides posadasii (strain C735) (Valley fever fungus).